The sequence spans 872 residues: Alanine--tRNA ligase (872 aa).

H558, H562, C660, and H664 together coordinate Zn(2+).

Belongs to the class-II aminoacyl-tRNA synthetase family. Zn(2+) serves as cofactor.

It localises to the cytoplasm. The enzyme catalyses tRNA(Ala) + L-alanine + ATP = L-alanyl-tRNA(Ala) + AMP + diphosphate. In terms of biological role, catalyzes the attachment of alanine to tRNA(Ala) in a two-step reaction: alanine is first activated by ATP to form Ala-AMP and then transferred to the acceptor end of tRNA(Ala). Also edits incorrectly charged Ser-tRNA(Ala) and Gly-tRNA(Ala) via its editing domain. The chain is Alanine--tRNA ligase from Chlamydia pneumoniae (Chlamydophila pneumoniae).